The sequence spans 67 residues: Large ribosomal subunit protein bL31 (67 aa).

Belongs to the bacterial ribosomal protein bL31 family. Type A subfamily. As to quaternary structure, part of the 50S ribosomal subunit.

Its function is as follows. Binds the 23S rRNA. This is Large ribosomal subunit protein bL31 from Finegoldia magna (strain ATCC 29328 / DSM 20472 / WAL 2508) (Peptostreptococcus magnus).